The primary structure comprises 379 residues: UDP-N-acetylglucosamine--N-acetylmuramyl-(pentapeptide) pyrophosphoryl-undecaprenol N-acetylglucosamine transferase (379 aa).

Residues Thr-10 to Gly-12, Asn-124, and Arg-165 each bind UDP-N-acetyl-alpha-D-glucosamine. The disordered stretch occupies residues Thr-174 to Ala-195. The UDP-N-acetyl-alpha-D-glucosamine site is built by Ser-211, Ile-266, and Gln-311.

This sequence belongs to the glycosyltransferase 28 family. MurG subfamily.

The protein localises to the cell inner membrane. It carries out the reaction di-trans,octa-cis-undecaprenyl diphospho-N-acetyl-alpha-D-muramoyl-L-alanyl-D-glutamyl-meso-2,6-diaminopimeloyl-D-alanyl-D-alanine + UDP-N-acetyl-alpha-D-glucosamine = di-trans,octa-cis-undecaprenyl diphospho-[N-acetyl-alpha-D-glucosaminyl-(1-&gt;4)]-N-acetyl-alpha-D-muramoyl-L-alanyl-D-glutamyl-meso-2,6-diaminopimeloyl-D-alanyl-D-alanine + UDP + H(+). It participates in cell wall biogenesis; peptidoglycan biosynthesis. Functionally, cell wall formation. Catalyzes the transfer of a GlcNAc subunit on undecaprenyl-pyrophosphoryl-MurNAc-pentapeptide (lipid intermediate I) to form undecaprenyl-pyrophosphoryl-MurNAc-(pentapeptide)GlcNAc (lipid intermediate II). The polypeptide is UDP-N-acetylglucosamine--N-acetylmuramyl-(pentapeptide) pyrophosphoryl-undecaprenol N-acetylglucosamine transferase (Pelobacter propionicus (strain DSM 2379 / NBRC 103807 / OttBd1)).